The chain runs to 413 residues: Histidine--tRNA ligase (413 aa).

Belongs to the class-II aminoacyl-tRNA synthetase family. Homodimer.

Its subcellular location is the cytoplasm. The catalysed reaction is tRNA(His) + L-histidine + ATP = L-histidyl-tRNA(His) + AMP + diphosphate + H(+). This Ehrlichia canis (strain Jake) protein is Histidine--tRNA ligase.